Reading from the N-terminus, the 305-residue chain is RNA-binding protein with serine-rich domain 1 (305 aa).

Residues 1–10 (MDLSGVKKKS) are compositionally biased toward basic residues. Residues 1–161 (MDLSGVKKKS…KRRSPSPKPT (161 aa)) are necessary for interaction with SRP54, nuclear localization and exon-skipping. The segment at 1-170 (MDLSGVKKKS…TKVHIGRLTR (170 aa)) is disordered. The segment at 1-220 (MDLSGVKKKS…ENPDEAEKAL (220 aa)) is necessary for interaction with the cleaved p110 isoform of CDC2L1. Residues lysine 7 and lysine 15 each participate in a glycyl lysine isopeptide (Lys-Gly) (interchain with G-Cter in SUMO2) cross-link. Residues 33 to 59 (DRSDEKSKDRSKDKGTTKESSEKDRGR) show a composition bias toward basic and acidic residues. Serine 53 is subject to Phosphoserine. Over residues 68 to 126 (ASSGSSSTRSRSSSTSSSGSSTSTGSSSGSSSSSASSRSGSSSTSRSSSSSSSSGSPSP) the composition is skewed to low complexity. A necessary for interactions with UPF2 and UPF3B and UPF2-dependent NMD region spans residues 69–121 (SSGSSSTRSRSSSTSSSGSSTSTGSSSGSSSSSASSRSGSSSTSRSSSSSSSS). Composition is skewed to basic residues over residues 127-143 (SRRR…KSKP) and 151-167 (RKRR…HIGR). A phosphoserine mark is found at serine 155 and serine 157. Residues 156 to 242 (PSPKPTKVHI…ITATAVLAPW (87 aa)) are necessary for interaction with PNN and exon-skipping. Residues 159–244 (KPTKVHIGRL…ATAVLAPWPR (86 aa)) are interaction with SAP18 and ACIN1. Residue threonine 161 is modified to Phosphothreonine. The RRM domain maps to 161 to 240 (TKVHIGRLTR…QEITATAVLA (80 aa)). Lysine 218 bears the N6-acetyllysine mark. A necessary for interaction with TRA2B, nuclear localization and exon-skipping region spans residues 238 to 305 (VLAPWPRPPP…RSRSSSNSSR (68 aa)). Positions 240 to 305 (APWPRPPPRR…RSRSSSNSSR (66 aa)) are disordered. Pro residues predominate over residues 242 to 262 (WPRPPPRRFSPPRRMLPPPPM). Positions 266 to 298 (SPPRMRRRSRSPRRRSPVRRRSRSPGRRRHRSR) are enriched in basic residues.

The protein belongs to the splicing factor SR family. In terms of assembly, found in mRNA splicing-dependent exon junction complexes (EJC). Found in a post-splicing complex with NXF1, RBM8A, UPF1, UPF2, UPF3A, UPF3B and RNPS1. Component of the heterotrimeric ASAP (apoptosis- and splicing-associated protein) and PSAP complexes consisting of RNPS1, SAP18 and either ACIN1 or PNN, respectively; the ASAP and PSAP complexes probably are formed mutually exclusive. Component of the active spliceosome. Associates with polysomes. Interacts with the cleaved p110 isoform of CDC2L1, CSNK2A1, PNN, SART3, SRP54, SRRM1 and TRA2B/SFRS10. Phosphorylated on one or more of the four Ser/Thr residues (Ser-43, Thr-49, Ser-52 or Ser-53). Ser-53 phosphorylation site is important for splicing and translation stimulation activity in vitro.

Its subcellular location is the nucleus. It localises to the nucleus speckle. The protein localises to the cytoplasm. In terms of biological role, part of pre- and post-splicing multiprotein mRNP complexes. Auxiliary component of the splicing-dependent multiprotein exon junction complex (EJC) deposited at splice junction on mRNAs. The EJC is a dynamic structure consisting of core proteins and several peripheral nuclear and cytoplasmic associated factors that join the complex only transiently either during EJC assembly or during subsequent mRNA metabolism. Component of the ASAP and PSAP complexes which bind RNA in a sequence-independent manner and are proposed to be recruited to the EJC prior to or during the splicing process and to regulate specific excision of introns in specific transcription subsets. The ASAP complex can inhibit RNA processing during in vitro splicing reactions. The ASAP complex promotes apoptosis and is disassembled after induction of apoptosis. Enhances the formation of the ATP-dependent A complex of the spliceosome. Involved in both constitutive splicing and, in association with SRP54 and TRA2B/SFRS10, in distinctive modulation of alternative splicing in a substrate-dependent manner. Involved in the splicing modulation of BCL2L1/Bcl-X (and probably other apoptotic genes); specifically inhibits formation of proapoptotic isoforms such as Bcl-X(S); the activity is different from the established EJC assembly and function. Participates in mRNA 3'-end cleavage. Involved in UPF2-dependent nonsense-mediated decay (NMD) of mRNAs containing premature stop codons. Also mediates increase of mRNA abundance and translational efficiency. Binds spliced mRNA 20-25 nt upstream of exon-exon junctions. This Rattus norvegicus (Rat) protein is RNA-binding protein with serine-rich domain 1 (Rnps1).